The sequence spans 901 residues: Protein translocase subunit SecA (901 aa).

ATP is bound by residues Gln-87, 105–109 (GEGKT), and Asp-512. A disordered region spans residues 859–901 (HQDDDSAAAAALAAQTGERKVGRNDPCPCGSGKKYKQCHGRLQ). The Zn(2+) site is built by Cys-885, Cys-887, Cys-896, and His-897. The span at 891 to 901 (KKYKQCHGRLQ) shows a compositional bias: basic residues.

The protein belongs to the SecA family. As to quaternary structure, monomer and homodimer. Part of the essential Sec protein translocation apparatus which comprises SecA, SecYEG and auxiliary proteins SecDF-YajC and YidC. It depends on Zn(2+) as a cofactor.

Its subcellular location is the cell inner membrane. The protein localises to the cytoplasm. The enzyme catalyses ATP + H2O + cellular proteinSide 1 = ADP + phosphate + cellular proteinSide 2.. Part of the Sec protein translocase complex. Interacts with the SecYEG preprotein conducting channel. Has a central role in coupling the hydrolysis of ATP to the transfer of proteins into and across the cell membrane, serving both as a receptor for the preprotein-SecB complex and as an ATP-driven molecular motor driving the stepwise translocation of polypeptide chains across the membrane. The polypeptide is Protein translocase subunit SecA (Escherichia coli O157:H7).